Reading from the N-terminus, the 337-residue chain is Ketol-acid reductoisomerase (NADP(+)) (337 aa).

The 180-residue stretch at 1 to 180 (MQVYYDKDAD…GGTKGGVIET (180 aa)) folds into the KARI N-terminal Rossmann domain. NADP(+) contacts are provided by residues 24 to 27 (YGSQ), Arg-47, and Ser-51. His-106 is a catalytic residue. NADP(+) is bound at residue Gly-132. Positions 181 to 326 (TFREETETDL…AQLRAMMPWI (146 aa)) constitute a KARI C-terminal knotted domain. Residues Asp-189, Glu-193, Glu-225, and Glu-229 each coordinate Mg(2+). Ser-250 contacts substrate.

The protein belongs to the ketol-acid reductoisomerase family. Requires Mg(2+) as cofactor.

The enzyme catalyses (2R)-2,3-dihydroxy-3-methylbutanoate + NADP(+) = (2S)-2-acetolactate + NADPH + H(+). It catalyses the reaction (2R,3R)-2,3-dihydroxy-3-methylpentanoate + NADP(+) = (S)-2-ethyl-2-hydroxy-3-oxobutanoate + NADPH + H(+). Its pathway is amino-acid biosynthesis; L-isoleucine biosynthesis; L-isoleucine from 2-oxobutanoate: step 2/4. It participates in amino-acid biosynthesis; L-valine biosynthesis; L-valine from pyruvate: step 2/4. Involved in the biosynthesis of branched-chain amino acids (BCAA). Catalyzes an alkyl-migration followed by a ketol-acid reduction of (S)-2-acetolactate (S2AL) to yield (R)-2,3-dihydroxy-isovalerate. In the isomerase reaction, S2AL is rearranged via a Mg-dependent methyl migration to produce 3-hydroxy-3-methyl-2-ketobutyrate (HMKB). In the reductase reaction, this 2-ketoacid undergoes a metal-dependent reduction by NADPH to yield (R)-2,3-dihydroxy-isovalerate. In Neisseria meningitidis serogroup C (strain 053442), this protein is Ketol-acid reductoisomerase (NADP(+)).